The chain runs to 450 residues: Oxygen-independent coproporphyrinogen III oxidase (450 aa).

The region spanning 45–282 (IPAGGSISLY…RTLILWDGYQ (238 aa)) is the Radical SAM core domain. Position 54 (tyrosine 54) interacts with S-adenosyl-L-methionine. Residues cysteine 60 and cysteine 64 each coordinate [4Fe-4S] cluster. Phenylalanine 66 is a binding site for S-adenosyl-L-methionine. Cysteine 67 is a binding site for [4Fe-4S] cluster. S-adenosyl-L-methionine-binding positions include glycine 111, 112-113 (GT), glutamate 144, glutamine 171, arginine 183, aspartate 208, alanine 242, and isoleucine 328.

The protein belongs to the anaerobic coproporphyrinogen-III oxidase family. As to quaternary structure, monomer. The cofactor is [4Fe-4S] cluster.

Its subcellular location is the cytoplasm. It carries out the reaction coproporphyrinogen III + 2 S-adenosyl-L-methionine = protoporphyrinogen IX + 2 5'-deoxyadenosine + 2 L-methionine + 2 CO2. It functions in the pathway porphyrin-containing compound metabolism; protoporphyrin-IX biosynthesis; protoporphyrinogen-IX from coproporphyrinogen-III (AdoMet route): step 1/1. Functionally, involved in the heme and chlorophyll biosynthesis. Catalyzes the anaerobic oxidative decarboxylation of propionate groups of rings A and B of coproporphyrinogen III to yield the vinyl groups in protoporphyrinogen IX. The sequence is that of Oxygen-independent coproporphyrinogen III oxidase (hemZ) from Cereibacter sphaeroides (strain ATCC 17023 / DSM 158 / JCM 6121 / CCUG 31486 / LMG 2827 / NBRC 12203 / NCIMB 8253 / ATH 2.4.1.) (Rhodobacter sphaeroides).